The sequence spans 255 residues: Putative SET domain-containing protein L678 (255 aa).

The region spanning 5-176 (NRISEVFIKK…TGEELTDNYV (172 aa)) is the SET domain. The disordered stretch occupies residues 235–255 (LQQNSKNLKKNPKKTIKATPK).

This sequence belongs to the class V-like SAM-binding methyltransferase superfamily.

This is Putative SET domain-containing protein L678 from Acanthamoeba polyphaga mimivirus (APMV).